The sequence spans 229 residues: MNVEEMKKAVARAALEFIEDDMVVGLGTGSTTAYFIRYLGEMIEKGKVEDIYGVPPPIKQKFLRMESGVPVLSLDQVDAIDIAVDGADEVDPNLNLIKGRGAALTMEKIIEYRAGTFIVLVDESKLVDYLCQKMPVPIEVIPAAWKAILEELSIFNAKAELRMGVKKDGPVVTENGNFIIDAKFPRIDDPLDMEIELNTIPGVVENGIFADIADIVLVGTKEGVKRLER.

Substrate is bound by residues 28-31, 85-88, and 98-101; these read TGST, DGAD, and KGRG. The active-site Proton acceptor is Glu107. Lys125 contacts substrate.

The protein belongs to the ribose 5-phosphate isomerase family. Homodimer.

The enzyme catalyses aldehydo-D-ribose 5-phosphate = D-ribulose 5-phosphate. It functions in the pathway carbohydrate degradation; pentose phosphate pathway; D-ribose 5-phosphate from D-ribulose 5-phosphate (non-oxidative stage): step 1/1. Its function is as follows. Catalyzes the reversible conversion of ribose-5-phosphate to ribulose 5-phosphate. In Pyrococcus furiosus (strain ATCC 43587 / DSM 3638 / JCM 8422 / Vc1), this protein is Ribose-5-phosphate isomerase A.